Here is an 800-residue protein sequence, read N- to C-terminus: Phenylalanine--tRNA ligase beta subunit (800 aa).

Positions 39–154 constitute a tRNA-binding domain; sequence SKDIKNLVVG…TEVEPGTDAL (116 aa). In terms of domain architecture, B5 spans 408–483; it reads SFVTPIDITA…RIYGYDEIPS (76 aa). The Mg(2+) site is built by aspartate 461, aspartate 467, glutamate 470, and glutamate 471. One can recognise an FDX-ACB domain in the interval 708-800; sequence PKFPGVTRDI…ALQAQGATIR (93 aa).

The protein belongs to the phenylalanyl-tRNA synthetase beta subunit family. Type 1 subfamily. As to quaternary structure, tetramer of two alpha and two beta subunits. Requires Mg(2+) as cofactor.

Its subcellular location is the cytoplasm. It carries out the reaction tRNA(Phe) + L-phenylalanine + ATP = L-phenylalanyl-tRNA(Phe) + AMP + diphosphate + H(+). The chain is Phenylalanine--tRNA ligase beta subunit from Staphylococcus haemolyticus (strain JCSC1435).